We begin with the raw amino-acid sequence, 307 residues long: Replicase polyprotein 1ab (307 aa).

The rdRp Fingers N-ter stretch occupies residues 1 to 76; the sequence is FNKFGKARLY…HQKCLKSIAA (76 aa). The Nsp12 RNA-dependent RNA polymerase domain occupies 1–307; the sequence is FNKFGKARLY…TDIEKGPHEF (307 aa). A rdRp Palm N-ter region spans residues 77 to 115; sequence TRGVPVVIGTTKFYGGWDDMLRRLIKDVDSPVLMGWDYP. In terms of domain architecture, RdRp catalytic spans 107–269; sequence PVLMGWDYPK…CYNSEFASKG (163 aa). The interval 116 to 174 is rdRp Fingers C-ter; the sequence is KCDRAMPNILRIVSSLVLARKHDSCCSHTDRFYRLANECAQVLSEIVMCGGCYYVKPGG. A rdRp Palm C-ter region spans residues 175 to 307; that stretch reads TSSGDATTAF…TDIEKGPHEF (133 aa). Catalysis depends on residues Ser254, Asp255, and Asp256. A region of interest (rdRp Thumb) is located at residue Phe307.

This sequence belongs to the coronaviruses polyprotein 1ab family.

The enzyme catalyses RNA(n) + a ribonucleoside 5'-triphosphate = RNA(n+1) + diphosphate. Functionally, the replicase polyprotein of coronaviruses is a multifunctional protein: it contains the activities necessary for the transcription of negative stranded RNA, leader RNA, subgenomic mRNAs and progeny virion RNA as well as proteinases responsible for the cleavage of the polyprotein into functional products. In terms of biological role, non-structural protein 1: binds to the 40S ribosomal subunit and inhibits host translation. The nsp1-40S ribosome complex further induces an endonucleolytic cleavage near the 5'UTR of host mRNAs, targeting them for degradation. By suppressing host gene expression, nsp1 facilitates efficient viral gene expression in infected cells and evasion from host immune response. This is Replicase polyprotein 1ab (rep) from Rattus norvegicus (Rat).